A 534-amino-acid polypeptide reads, in one-letter code: Sodium-dependent lysophosphatidylcholine symporter 1 (534 aa).

At 1–39 (MAKGEGAESGSAAGLLPTSILQASERPVQVKKEPKKKQQ) the chain is on the cytoplasmic side. Residues 40-69 (LSICNKLCYAVGGAPYQLTGCALGFFLQIY) form a helical membrane-spanning segment. The Extracellular segment spans residues 70–80 (LLDVAKVEPLP). Residues 81-101 (ASIILFVGRAWDAFTDPLVGF) traverse the membrane as a helical segment. Over 102-113 (CISKSSWTRLGR) the chain is Cytoplasmic. The chain crosses the membrane as a helical span at residues 114-133 (LMPWIIFSTPLAIIAYFLIW). Topologically, residues 134–148 (FVPDFPSGTESSHGF) are extracellular. The chain crosses the membrane as a helical span at residues 149 to 173 (LWYLLFYCLFETLVTCFHVPYSALT). Topologically, residues 174–180 (MFISTEQ) are cytoplasmic. Residues 181–212 (SERDSATAYRMTVEVLGTVIGTAIQGQIVGQA) form a helical membrane-spanning segment. Residues 213–232 (KAPCLQDQNGSVVVSEVANR) are Extracellular-facing. Cysteine 216 and cysteine 464 are disulfide-bonded. Residues asparagine 221 and asparagine 231 are each glycosylated (N-linked (GlcNAc...) asparagine). Residues 233–266 (TQSTASLKDTQNAYLLAAGIIASIYVLCAFILIL) form a helical membrane-spanning segment. Residues 267-297 (GVREQRELYESQQAESMPFFQGLRLVMGHGP) lie on the Cytoplasmic side of the membrane. The chain crosses the membrane as a helical span at residues 298–324 (YVKLIAGFLFTSLAFMLVEGNFALFCT). Residues 325-335 (YTLDFRNEFQN) are Extracellular-facing. Residues 336–354 (LLLAIMLSATFTIPIWQWF) traverse the membrane as a helical segment. Topologically, residues 355-358 (LTRF) are cytoplasmic. Residues 359 to 380 (GKKTAVYIGISSAVPFLILVAL) traverse the membrane as a helical segment. The Extracellular portion of the chain corresponds to 381–383 (MER). Residues 384 to 420 (NLIVTYVVAVAAGVSVAAAFLLPWSMLPDVIDDFHLK) traverse the membrane as a helical segment. The Cytoplasmic portion of the chain corresponds to 421-430 (HPHSPGTEPI). A helical transmembrane segment spans residues 431 to 457 (FFSFYVFFTKFASGVSLGVSTLSLDFA). Residues 458-469 (NYQRQGCSQPEQ) lie on the Extracellular side of the membrane. The helical transmembrane segment at 470 to 493 (VKFTLKMLVTMAPIILILLGLLLF) threads the bilayer. Residues 494 to 534 (KLYPIDEEKRRQNKKALQALREEASSSGCSDTDSTELASIL) are Cytoplasmic-facing.

It belongs to the major facilitator superfamily. In terms of processing, N-glycosylated. As to expression, widely expressed. Exhibits an oscillatory pattern of expression in brown adipose tissue and liver consistent with a circadian rhythm. Enriched in brain micro-vessels, where it is specifically present in endothelium constituting the blood-brain barrier (at protein level).

It is found in the cell membrane. Its subcellular location is the endoplasmic reticulum membrane. The enzyme catalyses a 1-acyl-sn-glycero-3-phosphocholine(in) + Na(+)(in) = a 1-acyl-sn-glycero-3-phosphocholine(out) + Na(+)(out). It catalyses the reaction 1-(4Z,7Z,10Z,13Z,16Z,19Z-docosahexaenoyl)-sn-glycero-3-phosphocholine(in) + Na(+)(in) = 1-(4Z,7Z,10Z,13Z,16Z,19Z-docosahexaenoyl)-sn-glycero-3-phosphocholine(out) + Na(+)(out). The catalysed reaction is 1-(9Z-octadecenoyl)-sn-glycero-3-phosphocholine(in) + Na(+)(in) = 1-(9Z-octadecenoyl)-sn-glycero-3-phosphocholine(out) + Na(+)(out). It carries out the reaction 1-hexadecanoyl-sn-glycero-3-phosphocholine(in) + Na(+)(in) = 1-hexadecanoyl-sn-glycero-3-phosphocholine(out) + Na(+)(out). The enzyme catalyses a 1-acyl-sn-glycero-3-phosphoethanolamine(in) + Na(+)(in) = a 1-acyl-sn-glycero-3-phosphoethanolamine(out) + Na(+)(out). In terms of biological role, sodium-dependent lysophosphatidylcholine (LPC) symporter, which plays an essential role for blood-brain barrier formation and function. Specifically expressed in endothelium of the blood-brain barrier of micro-vessels and transports LPC into the brain. Transport of LPC is essential because it constitutes the major mechanism by which docosahexaenoic acid (DHA), an omega-3 fatty acid that is essential for normal brain growth and cognitive function, enters the brain. Transports LPC carrying long-chain fatty acids such LPC oleate and LPC palmitate with a minimum acyl chain length of 14 carbons. Does not transport docosahexaenoic acid in unesterified fatty acid. Not required for central nervous system vascular morphogenesis. The sequence is that of Sodium-dependent lysophosphatidylcholine symporter 1 from Mus musculus (Mouse).